Reading from the N-terminus, the 238-residue chain is MKIQCDVCEKAPATLICCADEAALCAKCDVEVHAANKLASKHQRLFLDSLSTKFPPCDICLEKAAFIFCVEDRALLCRDCDEATHAPNTRSANHQRFLATGIRVALSSTSCNQEVEKNHFDPSNQQSLSKPPTQQPAAPSPLWATDEFFSYSDLDCSNKEKEQLDLGELDWLAEMGLFGDQPDQEALPVAEVPELSFSHLAHAHSYNRPMKSNVPNKKQRLEYRYDDEEEHFLVPDLG.

Zn(2+) is bound by residues Cys-5, Cys-8, Cys-28, His-33, Cys-57, Cys-60, Cys-80, and His-85. The segment at 5–47 adopts a B box-type 1; atypical zinc-finger fold; sequence CDVCEKAPATLICCADEAALCAKCDVEVHAANKLASKHQRLFL. The B box-type 2; atypical zinc finger occupies 57 to 99; the sequence is CDICLEKAAFIFCVEDRALLCRDCDEATHAPNTRSANHQRFLA. The disordered stretch occupies residues 115–139; it reads VEKNHFDPSNQQSLSKPPTQQPAAP. The segment covering 121–137 has biased composition (polar residues); that stretch reads DPSNQQSLSKPPTQQPA. The interval 226-238 is interaction with COP1; the sequence is DDEEEHFLVPDLG.

As to quaternary structure, interacts with COP1 WD40 domain. Interacts with HY5 and HYH. Post-translationally, COP1-mediated ubiquitination and subsequent proteasomal degradation of BBX25/STH occurs in the dark.

It localises to the nucleus. In terms of biological role, acts as a negative regulator of seedling photomorphogenesis. BBX25/STH and BBX24/STO function as transcriptional corepressors of HY5 activity, leading to the down-regulation of BBX22 expression. BBX25/STH acts additively with BBX24/STO during de-etiolation and the hypocotyl shade avoidance response. The polypeptide is B-box zinc finger protein 25 (Arabidopsis thaliana (Mouse-ear cress)).